A 126-amino-acid polypeptide reads, in one-letter code: Large ribosomal subunit protein bL21 (126 aa).

A disordered region spans residues 105 to 126; the sequence is KKPSVGPRAKRTKAAPAAEAAE.

Contacts protein L20. Part of the 50S ribosomal subunit.

In terms of biological role, this protein binds to 23S rRNA in the presence of protein L20. The chain is Large ribosomal subunit protein bL21 from Rhodopseudomonas palustris (strain ATCC BAA-98 / CGA009).